The primary structure comprises 572 residues: DNA polymerase (572 aa).

The 3'-5' exonuclease and strand displacement activities stretch occupies residues 1–222 (MPRKMFSCDF…LPMDKEIRRA (222 aa)). The interval 56 to 66 (YFHNLKFDGAF) is interaction with the primer terminal protein. Residues Asp142 and Asp166 each contribute to the Mg(2+) site. The segment at 223-226 (YRGG) is DNA-binding; Involved in the formation of a stable complex between TP and phi29 DNA polymerase. An initiation, polymerization and pyrophosphorolytic activities region spans residues 227–572 (FTWLNDKYKE…VLVDSVFTIK (346 aa)). Residues Asp246 and Val247 each contribute to the Mg(2+) site. Positions 251, 368, and 380 each coordinate 5-methyl-UTP. The Mg(2+) site is built by Asp453 and Asp455. Asp455 contacts 5-methyl-UTP.

It belongs to the DNA polymerase type-B family. In terms of assembly, interacts with the primer terminal protein; this interaction allows the initiation of TP-primed DNA replication at both viral DNA ends. Interacts with DNA. The cofactor is Mg(2+).

The catalysed reaction is DNA(n) + a 2'-deoxyribonucleoside 5'-triphosphate = DNA(n+1) + diphosphate. Its function is as follows. Polymerase responsible for protein-primed viral DNA replication by strand displacement with high processivity and fidelity. To start replication, the DNA polymerase forms a heterodimer with a free primer terminal protein (TP), recognizes the replication origins at both 5' ends of the linear chromosome, and initiates replication using as primer the OH-group of Ser-232 of the TP. This polymerase possesses three enzymatic activities: DNA synthesis (polymerase), primer terminal protein (TP) deoxynucleotidylation, which is the formation of a covalent linkage (phosphoester) between the hydroxyl group of a specific serine residue in TP and 5'-dAMP, a reaction directed by the second T at the 3' end, and 3' to 5' exonuclease activity. Exonuclease activity has a proofreading purpose. The chain is DNA polymerase (2) from Bacillus phage B103 (Bacteriophage B103).